Reading from the N-terminus, the 325-residue chain is Olfactory receptor 5H6 (325 aa).

Over 1–41 (MFLYLCFIFQRTCSEEMEEENATLLTEFVLTGFLHQPDCKI) the chain is Extracellular. Asn21 carries an N-linked (GlcNAc...) asparagine glycan. A helical transmembrane segment spans residues 42–62 (PLFLAFLVIYLITIMGNLGLI). Over 63–70 (VLIWKDPH) the chain is Cytoplasmic. The chain crosses the membrane as a helical span at residues 71–91 (LHIPMYLFLGSLAFVDASLSS). The Extracellular segment spans residues 92-115 (TVTPKMLINFLAKSKMISLSECMV). Cys113 and Cys205 are joined by a disulfide. A helical transmembrane segment spans residues 116-136 (QFFSLVTTVTTECFLLATMAY). Residues 137-155 (DRYVAICKALLYPVIMTNE) are Cytoplasmic-facing. The helical transmembrane segment at 156-176 (LCIQLLVLSFIGGLLHALIHE) threads the bilayer. At 177 to 212 (AFSFRLTFCNSNIIQHFYCDIIPLLKISCTDSSINF) the chain is on the extracellular side. Residues 213-233 (LMVFIFAGSVQVFTIGTILIS) form a helical membrane-spanning segment. Over 234-253 (YTIILFTILEKKSIKGIRKA) the chain is Cytoplasmic. A helical transmembrane segment spans residues 254-274 (VSTCGAHLLSVSLYYGPLTFK). At 275–287 (YLGSASPQADDQD) the chain is on the extracellular side. A helical membrane pass occupies residues 288–308 (MMESLFYTVIVPLLNPMIYSL). Residues 309 to 325 (RNKQVIASFTKMFKSNV) lie on the Cytoplasmic side of the membrane.

It belongs to the G-protein coupled receptor 1 family.

It is found in the cell membrane. Odorant receptor. In Homo sapiens (Human), this protein is Olfactory receptor 5H6 (OR5H6).